A 444-amino-acid polypeptide reads, in one-letter code: Vacuolar protein sorting-associated protein 4B (444 aa).

Residues 4–82 (TNTNLQKAID…KEYLKKKEKK (79 aa)) enclose the MIT domain. A coiled-coil region spans residues 19–82 (AQEDKAGNYE…KEYLKKKEKK (64 aa)). The segment at 77 to 118 (KKKEKKPQKPVKEEQSGPVDEKGNDSDGEAESDDPEKKKLQN) is disordered. A compositionally biased stretch (basic and acidic residues) spans 86–101 (PVKEEQSGPVDEKGND). Serine 102 and serine 108 each carry phosphoserine. An ATP-binding site is contributed by 174–181 (GPPGTGKS). Position 410 is a phosphoserine (serine 410).

The protein belongs to the AAA ATPase family. As to quaternary structure, proposed to be monomeric or homodimeric in nucleotide-free form and to oligomerize upon binding to ATP to form two stacked hexameric or heptameric rings with a central pore through which ESCRT-III substrates are translocated in an ATP-dependent manner. In vitro, associates on the inside of a helical tubular structure formed by a CHMP2A-CHMP3 polymer. Interacts with CHMP1A, CHMP1B, CHMP4B and CHMP6. Interacts with CHMP2A. Interacts with VPS4A; the interaction suggests a heteromeric assembly with VPS4A. Interacts with VTA1. In terms of tissue distribution, high level expression seen in the kidney. It is also expressed in the heart, brain, spleen, lung, liver, skeletal muscle, and testis.

The protein localises to the late endosome membrane. It carries out the reaction ATP + H2O = ADP + phosphate + H(+). Its function is as follows. Involved in late steps of the endosomal multivesicular bodies (MVB) pathway. Recognizes membrane-associated ESCRT-III assemblies and catalyzes their disassembly, possibly in combination with membrane fission. Redistributes the ESCRT-III components to the cytoplasm for further rounds of MVB sorting. MVBs contain intraluminal vesicles (ILVs) that are generated by invagination and scission from the limiting membrane of the endosome and mostly are delivered to lysosomes enabling degradation of membrane proteins, such as stimulated growth factor receptors, lysosomal enzymes and lipids. VPS4A/B are required for the exosomal release of SDCBP, CD63 and syndecan. Functionally, (Microbial infection) In conjunction with the ESCRT machinery also appears to function in topologically equivalent membrane fission events, such as the terminal stages of cytokinesis and enveloped virus budding (lentiviruses). The protein is Vacuolar protein sorting-associated protein 4B of Mus musculus (Mouse).